An 88-amino-acid chain; its full sequence is Putative transmembrane protein ORF24 (88 aa).

A run of 3 helical transmembrane segments spans residues 16–36 (LNMGLALLLATIMVMILWAGM), 42–62 (AVFVIWALTSITLIFTFVTQF), and 64–84 (FIWFWVMVMLSLLLISIVASI).

Its subcellular location is the host membrane. This is Putative transmembrane protein ORF24 from Haloarcula hispanica (His1V).